The sequence spans 327 residues: Eukaryotic translation initiation factor 3 subunit I (327 aa).

WD repeat units follow at residues 8-49, 51-89, 188-227, 229-268, and 285-324; these read GHER…GSYD, HNGA…CIYT, VHRY…KLKQ, KSER…GHFE, and GHFG…LGFT.

The protein belongs to the eIF-3 subunit I family. Component of the eukaryotic translation initiation factor 3 (eIF-3) complex.

The protein localises to the cytoplasm. Its function is as follows. Component of the eukaryotic translation initiation factor 3 (eIF-3) complex, which is involved in protein synthesis of a specialized repertoire of mRNAs and, together with other initiation factors, stimulates binding of mRNA and methionyl-tRNAi to the 40S ribosome. The eIF-3 complex specifically targets and initiates translation of a subset of mRNAs involved in cell proliferation. This chain is Eukaryotic translation initiation factor 3 subunit I, found in Caenorhabditis briggsae.